The following is a 468-amino-acid chain: Glutamate--tRNA ligase (468 aa).

The short motif at 14–24 (PSPTGFIHLGN) is the 'HIGH' region element. The 'KMSKS' region motif lies at 246–250 (KMSKR). K249 serves as a coordination point for ATP.

It belongs to the class-I aminoacyl-tRNA synthetase family. Glutamate--tRNA ligase type 1 subfamily. As to quaternary structure, monomer.

The protein localises to the cytoplasm. The catalysed reaction is tRNA(Glu) + L-glutamate + ATP = L-glutamyl-tRNA(Glu) + AMP + diphosphate. Catalyzes the attachment of glutamate to tRNA(Glu) in a two-step reaction: glutamate is first activated by ATP to form Glu-AMP and then transferred to the acceptor end of tRNA(Glu). The polypeptide is Glutamate--tRNA ligase (Leptothrix cholodnii (strain ATCC 51168 / LMG 8142 / SP-6) (Leptothrix discophora (strain SP-6))).